The following is a 408-amino-acid chain: Cobalt-precorrin-5B C(1)-methyltransferase (408 aa).

This sequence belongs to the CbiD family.

It carries out the reaction Co-precorrin-5B + S-adenosyl-L-methionine = Co-precorrin-6A + S-adenosyl-L-homocysteine. The protein operates within cofactor biosynthesis; adenosylcobalamin biosynthesis; cob(II)yrinate a,c-diamide from sirohydrochlorin (anaerobic route): step 6/10. Catalyzes the methylation of C-1 in cobalt-precorrin-5B to form cobalt-precorrin-6A. In Clostridioides difficile (strain 630) (Peptoclostridium difficile), this protein is Cobalt-precorrin-5B C(1)-methyltransferase.